A 236-amino-acid chain; its full sequence is DNA repair protein RecO (236 aa).

It belongs to the RecO family.

Functionally, involved in DNA repair and RecF pathway recombination. The protein is DNA repair protein RecO of Haemophilus influenzae (strain PittGG).